An 80-amino-acid chain; its full sequence is Acyl carrier protein (80 aa).

The region spanning 2-77 (SDIEQRVKKI…QAIDYAKAHV (76 aa)) is the Carrier domain. The residue at position 37 (Ser37) is an O-(pantetheine 4'-phosphoryl)serine.

It belongs to the acyl carrier protein (ACP) family. 4'-phosphopantetheine is transferred from CoA to a specific serine of apo-ACP by AcpS. This modification is essential for activity because fatty acids are bound in thioester linkage to the sulfhydryl of the prosthetic group.

The protein resides in the cytoplasm. The protein operates within lipid metabolism; fatty acid biosynthesis. In terms of biological role, carrier of the growing fatty acid chain in fatty acid biosynthesis. The chain is Acyl carrier protein from Herminiimonas arsenicoxydans.